The following is a 602-amino-acid chain: Elongation factor 4 (602 aa).

The tr-type G domain occupies 7–189; the sequence is KYIRNFSIVA…AIVNKVPAPD (183 aa). GTP-binding positions include 19 to 24 and 136 to 139; these read DHGKST and NKID.

It belongs to the TRAFAC class translation factor GTPase superfamily. Classic translation factor GTPase family. LepA subfamily.

The protein resides in the cell membrane. The enzyme catalyses GTP + H2O = GDP + phosphate + H(+). Functionally, required for accurate and efficient protein synthesis under certain stress conditions. May act as a fidelity factor of the translation reaction, by catalyzing a one-codon backward translocation of tRNAs on improperly translocated ribosomes. Back-translocation proceeds from a post-translocation (POST) complex to a pre-translocation (PRE) complex, thus giving elongation factor G a second chance to translocate the tRNAs correctly. Binds to ribosomes in a GTP-dependent manner. The protein is Elongation factor 4 of Clostridium botulinum (strain Kyoto / Type A2).